We begin with the raw amino-acid sequence, 1604 residues long: Collagen alpha-1(XVI) chain (1604 aa).

Residues 1-21 (MWVSWAPGLWLLGLWATFGHG) form the signal peptide. An N-linked (GlcNAc...) asparagine glycan is attached at N47. The Laminin G-like domain maps to 50–231 (GFNLIHRLSL…LQQVHIYCDP (182 aa)). Residues 232–374 (ELVLEEGCCE…SPDAPLQCAE (143 aa)) are nonhelical region 10 (NC10). Positions 301 to 311 (AERGAKVHQET) are enriched in basic and acidic residues. The segment at 301-509 (AERGAKVHQE…KGEKGDPCEV (209 aa)) is disordered. N327 carries an N-linked (GlcNAc...) asparagine glycan. In terms of domain architecture, Collagen-like 1 spans 375-423 (GPKGEKGESGALGPSGLPGSTGEKGQKGEKGDGGIKGVPGKPGRDGRPG). The triple-helical region 9 (COL9) with 3 imperfections stretch occupies residues 375–506 (GPKGEKGESG…PGVKGEKGDP (132 aa)). Over residues 383-397 (SGALGPSGLPGSTGE) the composition is skewed to low complexity. The segment covering 398–407 (KGQKGEKGDG) has biased composition (basic and acidic residues). The segment covering 449–460 (PGPPGLPGPPGI) has biased composition (pro residues). Over residues 486–495 (GKEGPGGKPG) the composition is skewed to gly residues. The segment at 507 to 521 (CEVCPTLPEGFQNFV) is nonhelical region 9 (NC9). The tract at residues 522 to 555 (GLPGKPGPKGEPGDPVPARGDPGIQGIKGEKGEP) is triple-helical region 8 (COL8) with 1 imperfection. The Cell attachment site signature appears at 540–542 (RGD). The interval 556–572 (CLSCSSVVGAQHLVSST) is nonhelical region 8 (NC8). The tract at residues 573–631 (GASGDVGSPGFGLPGLPGRAGVPGLKGEKGNFGEAGPAGSPGPPGPVGPAGIKGAKGEP) is triple-helical region 7 (COL7) with 1 imperfection. Collagen-like domains are found at residues 573–633 (GASG…EPCE) and 667–721 (GLPG…GEKG). The segment at 604 to 917 (FGEAGPAGSP…PPGIPGPPGP (314 aa)) is disordered. The segment at 632–652 (CEPCPALSNLQDGDVRVVALP) is nonhelical region 7 (NC7). Positions 653–723 (GPSGEKGEPG…AGPKGEKGDG (71 aa)) are triple-helical region 6 (COL6) with 1 imperfection. The span at 674-684 (KAGERGLKGQK) shows a compositional bias: basic and acidic residues. The segment covering 686-702 (DAGNPGDPGTPGTTGRP) has biased composition (low complexity). A nonhelical region 6 (NC6) region spans residues 724 to 738 (CTACPSLQGTVTDMA). Positions 739–876 (GRPGQPGPKG…RGEKGEPGEC (138 aa)) are triple-helical region 5 (COL5) with 3 imperfections. Composition is skewed to low complexity over residues 766–781 (LPGVQGPPGLKGVQGE), 792–808 (PQGEPGAPGLPGIQGLP), and 826–846 (PGVKGATGPVGPPGASVSGPP). The Collagen-like 4 domain occupies 788–840 (GVQGPQGEPGAPGLPGIQGLPGPRGPPGPTGEKGAQGSPGVKGATGPVGPPGA). Residues 864–873 (KGPRGEKGEP) are compositionally biased toward basic and acidic residues. The tract at residues 877–887 (SCPSQGDLIFS) is nonhelical region 5 (NC5). The Collagen-like 5 domain maps to 888–938 (GMPGAPGLWMGSSWQPGPQGPPGIPGPPGPPGVPGLQGVPGNNGLPGQPGL). A triple-helical region 4 (COL4) with 2 imperfections region spans residues 888-939 (GMPGAPGLWMGSSWQPGPQGPPGIPGPPGPPGVPGLQGVPGNNGLPGQPGLT). A compositionally biased stretch (pro residues) spans 905–917 (PQGPPGIPGPPGP). Residues 940-973 (AELGSLPIEQHLLKSICGDCVQGQRAHPGYLVEK) form a nonhelical region 4 (NC4) region. The triple-helical region 3 (COL3) stretch occupies residues 974–988 (GEKGDQGIPGVPGLD). Residues 989–1011 (NCAQCFLSLERPRAEEARGDNSE) form a nonhelical region 3 (NC3) region. 2 disordered regions span residues 1001–1429 (RAEE…VPGS) and 1468–1517 (MAAA…PGTK). Residues 1006–1008 (RGD) carry the Cell attachment site motif. Residues 1012 to 1433 (GDPGCVGSPG…PGVPGSMGDM (422 aa)) form a triple-helical region 2 (COL2) with 2 imperfections region. Positions 1018-1075 (GSPGLPGPPGLPGQRGEEGPPGMRGSPGPPGPIGPPGFPGAVGSPGLPGLQGERGLTG) constitute a Collagen-like 6 domain. Pro residues-rich tracts occupy residues 1044–1055 (PGPPGPIGPPGF), 1160–1169 (FPGPPGPPGF), and 1199–1208 (SPGPPGPPGI). Over residues 1217-1226 (LDGKDGKPGL) the composition is skewed to basic and acidic residues. Positions 1227-1229 (RGD) match the Cell attachment site motif. Residues 1271-1284 (RPGAEGEPGAMGPQ) are compositionally biased toward low complexity. Pro residues-rich tracts occupy residues 1286-1302 (RPGPPGHVGPPGPPGQP) and 1330-1342 (QPGPPGHPGPPGE). The segment covering 1369–1378 (DPGAAGQKGQ) has biased composition (low complexity). A compositionally biased stretch (gly residues) spans 1386–1395 (GMPGGPGKSG). The segment covering 1420-1429 (SPGLPGVPGS) has biased composition (low complexity). A nonhelical region 2 (NC2) region spans residues 1434–1472 (VNYDEIKRFIRQEIIKMFDERMAYYTSRMQFPMEMAAAP). Collagen-like domains are found at residues 1472–1524 (PGRP…GDIG) and 1528–1576 (AGEN…GKAG). Residues 1473-1578 (GRPGPPGKDG…MGQPGKAGHC (106 aa)) are triple-helical region 1 (COL1) with 2 imperfections. The interval 1579-1604 (NPSDCFGAMPMEQQYPPMKTMKGPFG) is nonhelical region 1 (NC1).

It belongs to the fibril-associated collagens with interrupted helices (FACIT) family. In terms of assembly, homotrimer. Interacts with FBN1, fibronectin and integrins ITGA1/ITGB1 and ITGA2/ITGB1. Integrin ITGA1/ITGB1 binds to a unique site within COL16A1 located close to its C-terminal end between collagenous domains COL1-COL3. Prolines at the third position of the tripeptide repeating unit (G-X-Y) are hydroxylated in some or all of the chains. In terms of processing, glycosylated. In terms of tissue distribution, in papillary dermis, is a component of specialized fibrillin-1-containing microfibrils, whereas in territorial cartilage matrix, it is localized to a discrete population of thin, weakly banded collagen fibrils in association with other collagens (at protein level). In the placenta, where it is found in the amnion, a membranous tissue lining the amniotic cavity. Within the amnion, it is found in an acellular, relatively dense layer of a complex network of reticular fibers. Also located to a fibroblast layer beneath this dense layer. Exists in tissues in association with other types of collagen.

The protein resides in the secreted. It is found in the extracellular space. It localises to the extracellular matrix. Functionally, involved in mediating cell attachment and inducing integrin-mediated cellular reactions, such as cell spreading and alterations in cell morphology. The sequence is that of Collagen alpha-1(XVI) chain (COL16A1) from Homo sapiens (Human).